A 201-amino-acid chain; its full sequence is Large ribosomal subunit protein uL4 (201 aa).

The segment at 43–69 is disordered; sequence TKAQKTRSEVAGGGKKPWRQKGTGRAR.

Belongs to the universal ribosomal protein uL4 family. Part of the 50S ribosomal subunit.

Functionally, one of the primary rRNA binding proteins, this protein initially binds near the 5'-end of the 23S rRNA. It is important during the early stages of 50S assembly. It makes multiple contacts with different domains of the 23S rRNA in the assembled 50S subunit and ribosome. In terms of biological role, forms part of the polypeptide exit tunnel. This is Large ribosomal subunit protein uL4 from Idiomarina loihiensis (strain ATCC BAA-735 / DSM 15497 / L2-TR).